The chain runs to 208 residues: Uracil phosphoribosyltransferase (208 aa).

5-phospho-alpha-D-ribose 1-diphosphate is bound by residues Arg-78, Arg-103, and 130–138 (DPMLATGGS). Uracil is bound by residues Ile-193 and 198–200 (GDA). Asp-199 lines the 5-phospho-alpha-D-ribose 1-diphosphate pocket.

It belongs to the UPRTase family. Mg(2+) is required as a cofactor.

It catalyses the reaction UMP + diphosphate = 5-phospho-alpha-D-ribose 1-diphosphate + uracil. The protein operates within pyrimidine metabolism; UMP biosynthesis via salvage pathway; UMP from uracil: step 1/1. Allosterically activated by GTP. In terms of biological role, catalyzes the conversion of uracil and 5-phospho-alpha-D-ribose 1-diphosphate (PRPP) to UMP and diphosphate. This is Uracil phosphoribosyltransferase from Escherichia fergusonii (strain ATCC 35469 / DSM 13698 / CCUG 18766 / IAM 14443 / JCM 21226 / LMG 7866 / NBRC 102419 / NCTC 12128 / CDC 0568-73).